The primary structure comprises 115 residues: Probable 4-amino-4-deoxy-L-arabinose-phosphoundecaprenol flippase subunit ArnE (115 aa).

3 helical membrane passes run 42–62, 65–85, and 93–112; these read PWPW…LLLL, VEVG…TLAA, and VDRR…ALLG. The EamA domain occupies 46–113; the sequence is LALLALGLGL…IVAGVALLGR (68 aa).

It belongs to the ArnE family. In terms of assembly, heterodimer of ArnE and ArnF.

The protein localises to the cell inner membrane. The protein operates within bacterial outer membrane biogenesis; lipopolysaccharide biosynthesis. Its function is as follows. Translocates 4-amino-4-deoxy-L-arabinose-phosphoundecaprenol (alpha-L-Ara4N-phosphoundecaprenol) from the cytoplasmic to the periplasmic side of the inner membrane. This Pseudomonas aeruginosa (strain LESB58) protein is Probable 4-amino-4-deoxy-L-arabinose-phosphoundecaprenol flippase subunit ArnE.